A 276-amino-acid chain; its full sequence is MKAQILREMKVLTAIEPEFEVQRRVAFIKTKLKEARSKALVLGISGGVDSSTAGRLCQLAVDSLNHENSQGGYQFIAVRLPYQIQKDEHEAQLACQFIQPSKLVTVNVHQGVDGVHSATVAALAEAGLPLPDVAKVDFVKGNVKARMRMIAQYELAGLVGGLVVGTDHSAENITGFYTKWGDGACDLAPLFGLNKRQVRQLAAYLGAPESLVHKAPTADLEDNKPLLEDEVALGLTYAQIDDFLEGKDVGKAVEDKLIGIYKATQHKRQPIPTIYD.

An ATP-binding site is contributed by 43 to 50; it reads GISGGVDS. Position 49 (Asp-49) interacts with Mg(2+). Arg-146 lines the deamido-NAD(+) pocket. ATP is bound at residue Thr-166. Glu-171 is a binding site for Mg(2+). Positions 179 and 186 each coordinate deamido-NAD(+). Lys-195 and Thr-217 together coordinate ATP. Residue 266–267 participates in deamido-NAD(+) binding; it reads HK.

This sequence belongs to the NAD synthetase family. As to quaternary structure, homodimer.

The enzyme catalyses deamido-NAD(+) + NH4(+) + ATP = AMP + diphosphate + NAD(+) + H(+). It functions in the pathway cofactor biosynthesis; NAD(+) biosynthesis; NAD(+) from deamido-NAD(+) (ammonia route): step 1/1. In terms of biological role, catalyzes the ATP-dependent amidation of deamido-NAD to form NAD. Uses ammonia as a nitrogen source. This is NH(3)-dependent NAD(+) synthetase from Shewanella baltica (strain OS223).